The following is a 294-amino-acid chain: Ribosomal RNA small subunit methyltransferase A (294 aa).

The S-adenosyl-L-methionine site is built by N31, L33, G58, E79, D104, and N129.

This sequence belongs to the class I-like SAM-binding methyltransferase superfamily. rRNA adenine N(6)-methyltransferase family. RsmA subfamily.

It is found in the cytoplasm. It catalyses the reaction adenosine(1518)/adenosine(1519) in 16S rRNA + 4 S-adenosyl-L-methionine = N(6)-dimethyladenosine(1518)/N(6)-dimethyladenosine(1519) in 16S rRNA + 4 S-adenosyl-L-homocysteine + 4 H(+). Functionally, specifically dimethylates two adjacent adenosines (A1518 and A1519) in the loop of a conserved hairpin near the 3'-end of 16S rRNA in the 30S particle. May play a critical role in biogenesis of 30S subunits. In Oceanobacillus iheyensis (strain DSM 14371 / CIP 107618 / JCM 11309 / KCTC 3954 / HTE831), this protein is Ribosomal RNA small subunit methyltransferase A.